The chain runs to 455 residues: ATP-dependent protease ATPase subunit HslU (455 aa).

ATP is bound by residues Val-23, 65-70 (GVGKTE), Asp-266, Glu-333, and Arg-405.

Belongs to the ClpX chaperone family. HslU subfamily. As to quaternary structure, a double ring-shaped homohexamer of HslV is capped on each side by a ring-shaped HslU homohexamer. The assembly of the HslU/HslV complex is dependent on binding of ATP.

The protein resides in the cytoplasm. Functionally, ATPase subunit of a proteasome-like degradation complex; this subunit has chaperone activity. The binding of ATP and its subsequent hydrolysis by HslU are essential for unfolding of protein substrates subsequently hydrolyzed by HslV. HslU recognizes the N-terminal part of its protein substrates and unfolds these before they are guided to HslV for hydrolysis. The polypeptide is ATP-dependent protease ATPase subunit HslU (Xanthomonas euvesicatoria pv. vesicatoria (strain 85-10) (Xanthomonas campestris pv. vesicatoria)).